Consider the following 25-residue polypeptide: Snaclec bothroalternin subunit alpha/beta (25 aa).

Residues 1–25 enclose the C-type lectin domain; sequence DCPSDWSNHEGHCYRVFNEWMNWAD. Cysteines 2 and 13 form a disulfide.

It belongs to the snaclec family. Heterodimer of subunits alpha and beta; disulfide-linked. As to expression, expressed by the venom gland.

The protein resides in the secreted. Thrombin (F2) inhibitor that inhibits aggregation of rabbit platelets induced by alpha-thrombin. In Bothrops alternatus (Urutu), this protein is Snaclec bothroalternin subunit alpha/beta.